The chain runs to 369 residues: tRNA(Met) cytidine acetate ligase (369 aa).

Residues 7–20, glycine 96, asparagine 152, and arginine 175 contribute to the ATP site; that span reads VAEFNPFHNGHKYL.

It belongs to the TmcAL family.

It is found in the cytoplasm. The enzyme catalyses cytidine(34) in elongator tRNA(Met) + acetate + ATP = N(4)-acetylcytidine(34) in elongator tRNA(Met) + AMP + diphosphate. Catalyzes the formation of N(4)-acetylcytidine (ac(4)C) at the wobble position of elongator tRNA(Met), using acetate and ATP as substrates. First activates an acetate ion to form acetyladenylate (Ac-AMP) and then transfers the acetyl group to tRNA to form ac(4)C34. In Streptococcus agalactiae serotype III (strain NEM316), this protein is tRNA(Met) cytidine acetate ligase.